The primary structure comprises 232 residues: MGPLALPAWLQPRYRKNAYLFIYYLIQFCGHSWIFTNMTVRFFSFGKDSMVDTFYAIGLVMRLCQSVSLLELLHIYVGIESNHLLPRFLQLTERIIILFVVITSQEEVQEKYVVCVLFVFWNLLDMVRYTYSMLSVIGISYAVLTWLSQTLWMPIYPLCVLAEAFAIYQSLPYFESFGTYSTKLPFDLSIYFPYVLKIYLMMLFIGMYFTYSHLYSERRDILGIFPIKKKKM.

The Cytoplasmic portion of the chain corresponds to 1–19 (MGPLALPAWLQPRYRKNAY). The chain crosses the membrane as a helical span at residues 20 to 40 (LFIYYLIQFCGHSWIFTNMTV). The Lumenal segment spans residues 41–56 (RFFSFGKDSMVDTFYA). A helical transmembrane segment spans residues 57–77 (IGLVMRLCQSVSLLELLHIYV). Topologically, residues 78-112 (GIESNHLLPRFLQLTERIIILFVVITSQEEVQEKY) are cytoplasmic. The helical transmembrane segment at 113 to 133 (VVCVLFVFWNLLDMVRYTYSM) threads the bilayer. Residues 134–135 (LS) lie on the Lumenal side of the membrane. The chain crosses the membrane as a helical span at residues 136-156 (VIGISYAVLTWLSQTLWMPIY). The active site involves Tyr-156. Pro-157 is a topological domain (cytoplasmic). Residues 158–178 (LCVLAEAFAIYQSLPYFESFG) traverse the membrane as a helical segment. Glu-163 is a catalytic residue. The Lumenal portion of the chain corresponds to 179–189 (TYSTKLPFDLS). The helical transmembrane segment at 190 to 210 (IYFPYVLKIYLMMLFIGMYFT) threads the bilayer. The Cytoplasmic segment spans residues 211 to 232 (YSHLYSERRDILGIFPIKKKKM).

It belongs to the very long-chain fatty acids dehydratase HACD family. As to quaternary structure, may interact with enzymes of the ELO family (including ELOVL1); with those enzymes that mediate condensation, the first of the four steps of the reaction cycle responsible for fatty acids elongation, may be part of a larger fatty acids elongase complex. In terms of tissue distribution, highly expressed in leukocytes, and low expression in heart, spleen, kidney, and placenta.

Its subcellular location is the endoplasmic reticulum membrane. It catalyses the reaction a very-long-chain (3R)-3-hydroxyacyl-CoA = a very-long-chain (2E)-enoyl-CoA + H2O. The catalysed reaction is (3R)-hydroxyhexadecanoyl-CoA = (2E)-hexadecenoyl-CoA + H2O. It functions in the pathway lipid metabolism; fatty acid biosynthesis. Functionally, catalyzes the third of the four reactions of the long-chain fatty acids elongation cycle. This endoplasmic reticulum-bound enzymatic process, allows the addition of two carbons to the chain of long- and very long-chain fatty acids/VLCFAs per cycle. This enzyme catalyzes the dehydration of the 3-hydroxyacyl-CoA intermediate into trans-2,3-enoyl-CoA, within each cycle of fatty acid elongation. Thereby, it participates in the production of VLCFAs of different chain lengths that are involved in multiple biological processes as precursors of membrane lipids and lipid mediators. The polypeptide is Very-long-chain (3R)-3-hydroxyacyl-CoA dehydratase 4 (Homo sapiens (Human)).